Reading from the N-terminus, the 471-residue chain is 1,3-beta-glucanosyltransferase GAS4 (471 aa).

The N-terminal stretch at 1–21 (MMVFSSTFIFLILELVVLCEA) is a signal peptide. A disulfide bond links Cys70 and Cys99. Tyr88 lines the (1,3-beta-D-glucosyl)n pocket. Asn151 carries N-linked (GlcNAc...) asparagine glycosylation. 4 residues coordinate (1,3-beta-D-glucosyl)n: Asn160, Glu161, Asp203, and Arg208. Glu161 (proton donor) is an active-site residue. Intrachain disulfides connect Cys217–Cys354 and Cys238–Cys269. Residue Glu266 is the Nucleophile of the active site. (1,3-beta-D-glucosyl)n is bound at residue Tyr298. The N-linked (GlcNAc...) asparagine glycan is linked to Asn398. A lipid anchor (GPI-anchor amidated asparagine) is attached at Asn447. A propeptide spans 448-471 (SASISGPLLPLGLCLLFFTFSLFF) (removed in mature form).

This sequence belongs to the glycosyl hydrolase 72 family.

It localises to the cell membrane. Its function is as follows. Splits internally a 1,3-beta-glucan molecule and transfers the newly generated reducing end (the donor) to the non-reducing end of another 1,3-beta-glucan molecule (the acceptor) forming a 1,3-beta linkage, resulting in the elongation of 1,3-beta-glucan chains in the cell wall. Involved in spore wall assembly. The polypeptide is 1,3-beta-glucanosyltransferase GAS4 (GAS4) (Saccharomyces cerevisiae (strain ATCC 204508 / S288c) (Baker's yeast)).